Here is a 283-residue protein sequence, read N- to C-terminus: uncharacterized protein (283 aa).

This is an uncharacterized protein from Caenorhabditis elegans.